Here is a 201-residue protein sequence, read N- to C-terminus: Flagellin B1 (201 aa).

Residues 1 to 11 (MFEQNDDRDRG) constitute a propeptide that is removed on maturation.

The protein belongs to the archaeal flagellin family.

The protein resides in the archaeal flagellum. Its function is as follows. Flagellin is the subunit protein which polymerizes to form the filaments of archaeal flagella. This is Flagellin B1 (flaB1) from Natrialba magadii (strain ATCC 43099 / DSM 3394 / CCM 3739 / CIP 104546 / IAM 13178 / JCM 8861 / NBRC 102185 / NCIMB 2190 / MS3) (Natronobacterium magadii).